We begin with the raw amino-acid sequence, 132 residues long: Small ribosomal subunit protein uS8 (132 aa).

Belongs to the universal ribosomal protein uS8 family. In terms of assembly, part of the 30S ribosomal subunit. Contacts proteins S5 and S12.

Functionally, one of the primary rRNA binding proteins, it binds directly to 16S rRNA central domain where it helps coordinate assembly of the platform of the 30S subunit. The chain is Small ribosomal subunit protein uS8 from Nitrobacter hamburgensis (strain DSM 10229 / NCIMB 13809 / X14).